A 646-amino-acid chain; its full sequence is Chaperone protein DnaK (646 aa).

Residue Thr198 is modified to Phosphothreonine; by autocatalysis. Residues 603-646 (EQAQQAGGAEGFDPNAFQGGDAGQQKADDGVVDAEFTEVKDDKK) are disordered. Residues 618–627 (AFQGGDAGQQ) show a composition bias toward low complexity.

It belongs to the heat shock protein 70 family.

Its function is as follows. Acts as a chaperone. The sequence is that of Chaperone protein DnaK from Acinetobacter baumannii (strain ACICU).